The chain runs to 150 residues: uncharacterized protein (150 aa).

Residues 1-19 (MNDDSSSSSSGDSSDGSSG) are compositionally biased toward low complexity. Disordered regions lie at residues 1–21 (MNDD…SGTT) and 85–131 (EPEA…AYPE). Pro residues predominate over residues 106-115 (RPPPTEPPTV).

This is an uncharacterized protein from Schizosaccharomyces pombe (strain 972 / ATCC 24843) (Fission yeast).